A 360-amino-acid polypeptide reads, in one-letter code: Phospho-N-acetylmuramoyl-pentapeptide-transferase (360 aa).

10 consecutive transmembrane segments (helical) span residues 21-41 (YVTF…LWWG), 74-94 (MGGI…GDLG), 97-117 (YVWV…IDDY), 135-155 (ILQS…ADTV), 168-188 (IMPQ…VGSS), 199-219 (GLAI…AYLS), 236-256 (AGEL…FLWF), 263-283 (VFMG…IAVL), 288-308 (ILLV…ILQV), and 338-358 (VIVR…ATLK).

It belongs to the glycosyltransferase 4 family. MraY subfamily. Requires Mg(2+) as cofactor.

It is found in the cell inner membrane. The enzyme catalyses UDP-N-acetyl-alpha-D-muramoyl-L-alanyl-gamma-D-glutamyl-meso-2,6-diaminopimeloyl-D-alanyl-D-alanine + di-trans,octa-cis-undecaprenyl phosphate = di-trans,octa-cis-undecaprenyl diphospho-N-acetyl-alpha-D-muramoyl-L-alanyl-D-glutamyl-meso-2,6-diaminopimeloyl-D-alanyl-D-alanine + UMP. The protein operates within cell wall biogenesis; peptidoglycan biosynthesis. In terms of biological role, catalyzes the initial step of the lipid cycle reactions in the biosynthesis of the cell wall peptidoglycan: transfers peptidoglycan precursor phospho-MurNAc-pentapeptide from UDP-MurNAc-pentapeptide onto the lipid carrier undecaprenyl phosphate, yielding undecaprenyl-pyrophosphoryl-MurNAc-pentapeptide, known as lipid I. This Shewanella violacea (strain JCM 10179 / CIP 106290 / LMG 19151 / DSS12) protein is Phospho-N-acetylmuramoyl-pentapeptide-transferase.